We begin with the raw amino-acid sequence, 880 residues long: Interference hedgehog (880 aa).

The first 20 residues, 1-20, serve as a signal peptide directing secretion; it reads MPSIVSSLLLVVLLTSPLGA. Residues 21 to 703 are Extracellular-facing; that stretch reads IPVLYPSPPP…SHNETFSMSP (683 aa). Ig-like C2-type domains follow at residues 37–142, 154–235, 251–339, and 345–432; these read PGVR…TARL, PVTS…STSS, PYLL…FIQV, and PQIV…LQVT. 4 disulfide bridges follow: Cys60-Cys126, Cys172-Cys219, Cys275-Cys323, and Cys366-Cys414. 3 N-linked (GlcNAc...) asparagine glycosylation sites follow: Asn79, Asn102, and Asn208. Positions 435-468 are disordered; it reads PIHSESTQQSDHNHSKANRGRRPAQMIPPSAPNV. Residues Asn447 and Asn467 are each glycosylated (N-linked (GlcNAc...) asparagine). 2 Fibronectin type-III domains span residues 462-570 and 578-673; these read PPSA…LQPG and VPEM…TQRP. Arg498, Lys504, Lys506, and Arg544 together coordinate heparin. N-linked (GlcNAc...) asparagine glycosylation is present at Asn560. Residues 665 to 699 are disordered; sequence LKQGRTQRPMVSTTEEATLQTGVRDTTTPSHNETF. Over residues 668 to 699 the composition is skewed to polar residues; that stretch reads GRTQRPMVSTTEEATLQTGVRDTTTPSHNETF. N-linked (GlcNAc...) asparagine glycosylation occurs at Asn696. Residues 704–724 traverse the membrane as a helical segment; that stretch reads IVTGTIGGGAVLILFVVTTCL. At 725-880 the chain is on the cytoplasmic side; the sequence is CMWRRRNSRA…SSGSLNSVGV (156 aa). The disordered stretch occupies residues 797–880; it reads YFQRQPTYDY…SSGSLNSVGV (84 aa). 2 stretches are compositionally biased toward low complexity: residues 827–839 and 864–880; these read RAGSSNGNNNNLN and SSRSENLSSGSLNSVGV.

Belongs to the immunoglobulin superfamily. IHOG family. In terms of assembly, homodimer. Heterotetramer; 2 iHog chains bind 2 hh chains when facilitated by heparin, heparin is required to promote high-affinity interactions between hh and iHog.

Its subcellular location is the membrane. Mediates response to the active Hedgehog (Hh) protein signal in embryos, functioning upstream or at the level of patched (ptc). The sequence is that of Interference hedgehog from Drosophila ananassae (Fruit fly).